We begin with the raw amino-acid sequence, 666 residues long: tRNA 5-methylaminomethyl-2-thiouridine biosynthesis bifunctional protein MnmC (666 aa).

The interval 1 to 253 (MSSPFVPIIT…KRHMICAHYE (253 aa)) is tRNA (mnm(5)s(2)U34)-methyltransferase. The interval 283–666 (VGGGLAGCFI…FLRKKIIQGP (384 aa)) is FAD-dependent cmnm(5)s(2)U34 oxidoreductase.

This sequence in the N-terminal section; belongs to the methyltransferase superfamily. tRNA (mnm(5)s(2)U34)-methyltransferase family. The protein in the C-terminal section; belongs to the DAO family. It depends on FAD as a cofactor.

The protein resides in the cytoplasm. The enzyme catalyses 5-aminomethyl-2-thiouridine(34) in tRNA + S-adenosyl-L-methionine = 5-methylaminomethyl-2-thiouridine(34) in tRNA + S-adenosyl-L-homocysteine + H(+). Functionally, catalyzes the last two steps in the biosynthesis of 5-methylaminomethyl-2-thiouridine (mnm(5)s(2)U) at the wobble position (U34) in tRNA. Catalyzes the FAD-dependent demodification of cmnm(5)s(2)U34 to nm(5)s(2)U34, followed by the transfer of a methyl group from S-adenosyl-L-methionine to nm(5)s(2)U34, to form mnm(5)s(2)U34. This Legionella pneumophila subsp. pneumophila (strain Philadelphia 1 / ATCC 33152 / DSM 7513) protein is tRNA 5-methylaminomethyl-2-thiouridine biosynthesis bifunctional protein MnmC.